The chain runs to 228 residues: Cytidylate kinase (228 aa).

12–20 contributes to the ATP binding site; the sequence is GPSGAGKGT.

The protein belongs to the cytidylate kinase family. Type 1 subfamily.

It localises to the cytoplasm. It catalyses the reaction CMP + ATP = CDP + ADP. The catalysed reaction is dCMP + ATP = dCDP + ADP. This chain is Cytidylate kinase, found in Photobacterium profundum (strain SS9).